The primary structure comprises 204 residues: Oxidoreductase iacF (204 aa).

The protein belongs to the oxidoreductase OpS7 family.

It participates in secondary metabolite biosynthesis. Its function is as follows. Oxidoreductase; part of the gene cluster that mediates the biosynthesis of iso-A82775C, a enylepoxycyclohexane and biosynthetic precursor of the chloropestolide anticancer natural products. Within the cluster, the prenyltransferase iacE prenylates siccayne to generate pestalodiol E, using dimethylallyl diphosphate (DMAPP) as cosubstrate. The probable oxidoreductase iacF is then involved in the epoxidation of pestalodiol F to pestalodiol F, which is further converted to pestalofone A by the short-chain dehydrogenase/reductase iacG. Iso-A82775C is subsequently generated from pestalofone A by the short-chain dehydrogenase/reductase iacC. Iso-A82775C is further condensed with maldoxin via a Diels-Alder reaction to produce the anticancer natural products chloropestolides A to E. The protein is Oxidoreductase iacF of Pestalotiopsis fici (strain W106-1 / CGMCC3.15140).